A 276-amino-acid chain; its full sequence is Dermonecrotic toxin LsaSicTox-alphaIB2i (276 aa).

His-5 is an active-site residue. Mg(2+) contacts are provided by Glu-25 and Asp-27. His-41 (nucleophile) is an active-site residue. 2 disulfide bridges follow: Cys-45/Cys-51 and Cys-47/Cys-190. A Mg(2+)-binding site is contributed by Asp-85. Asn-129 and Asn-253 each carry an N-linked (GlcNAc...) asparagine glycan.

This sequence belongs to the arthropod phospholipase D family. Class II subfamily. Mg(2+) is required as a cofactor. As to expression, expressed by the venom gland.

The protein resides in the secreted. It carries out the reaction an N-(acyl)-sphingosylphosphocholine = an N-(acyl)-sphingosyl-1,3-cyclic phosphate + choline. The enzyme catalyses an N-(acyl)-sphingosylphosphoethanolamine = an N-(acyl)-sphingosyl-1,3-cyclic phosphate + ethanolamine. The catalysed reaction is a 1-acyl-sn-glycero-3-phosphocholine = a 1-acyl-sn-glycero-2,3-cyclic phosphate + choline. It catalyses the reaction a 1-acyl-sn-glycero-3-phosphoethanolamine = a 1-acyl-sn-glycero-2,3-cyclic phosphate + ethanolamine. In terms of biological role, dermonecrotic toxins cleave the phosphodiester linkage between the phosphate and headgroup of certain phospholipids (sphingolipid and lysolipid substrates), forming an alcohol (often choline) and a cyclic phosphate. This toxin acts on sphingomyelin (SM). It may also act on ceramide phosphoethanolamine (CPE), lysophosphatidylcholine (LPC) and lysophosphatidylethanolamine (LPE), but not on lysophosphatidylserine (LPS), and lysophosphatidylglycerol (LPG). It acts by transphosphatidylation, releasing exclusively cyclic phosphate products as second products. Induces dermonecrosis, hemolysis, increased vascular permeability, edema, inflammatory response, and platelet aggregation. This chain is Dermonecrotic toxin LsaSicTox-alphaIB2i, found in Loxosceles sabina (Tucson recluse spider).